The primary structure comprises 178 residues: 5,6,7,8-tetrahydromethanopterin hydro-lyase (178 aa).

His33 (proton donor) is an active-site residue. The substrate site is built by Asp35, Leu64, Lys82, Thr84, and Gln99.

It belongs to the formaldehyde-activating enzyme family.

The protein localises to the cytoplasm. The enzyme catalyses 5,6,7,8-tetrahydromethanopterin + formaldehyde = 5,10-methylenetetrahydromethanopterin + H2O. Functionally, catalyzes the condensation of formaldehyde with tetrahydromethanopterin (H(4)MPT) to 5,10-methylenetetrahydromethanopterin. This Methanosarcina barkeri (strain Fusaro / DSM 804) protein is 5,6,7,8-tetrahydromethanopterin hydro-lyase (faeA).